We begin with the raw amino-acid sequence, 62 residues long: Photosystem II reaction center protein Z (62 aa).

2 helical membrane-spanning segments follow: residues 8–28 (ALISLVLVSFVLVVGVPVAYA) and 41–61 (WLGSGVWIALVLLVGLLNFFV).

It belongs to the PsbZ family. As to quaternary structure, PSII is composed of 1 copy each of membrane proteins PsbA, PsbB, PsbC, PsbD, PsbE, PsbF, PsbH, PsbI, PsbJ, PsbK, PsbL, PsbM, PsbT, PsbX, PsbY, PsbZ, Psb30/Ycf12, peripheral proteins PsbO, CyanoQ (PsbQ), PsbU, PsbV and a large number of cofactors. It forms dimeric complexes.

The protein localises to the cellular thylakoid membrane. In terms of biological role, may control the interaction of photosystem II (PSII) cores with the light-harvesting antenna, regulates electron flow through the 2 photosystem reaction centers. PSII is a light-driven water plastoquinone oxidoreductase, using light energy to abstract electrons from H(2)O, generating a proton gradient subsequently used for ATP formation. This is Photosystem II reaction center protein Z from Trichormus variabilis (strain ATCC 29413 / PCC 7937) (Anabaena variabilis).